Consider the following 151-residue polypeptide: Class I hydrophobin A (151 aa).

The first 17 residues, 1–17 (MQFSVAAVLALATAVAA), serve as a signal peptide directing secretion. Disulfide bonds link C52–C125, C60–C119, C61–C101, and C126–C144.

It belongs to the fungal hydrophobin family. In terms of assembly, interacts with cutinase cutL1 in a pH-dependent manner. Self-assembles to form functional amyloid fibrils called rodlets. Self-assembly into fibrillar rodlets occurs spontaneously at hydrophobic:hydrophilic interfaces and the rodlets further associate laterally to form amphipathic monolayers. rolA rodlet formation is regulated by the strength of ionic interactions between rolA molecules. Three types of self-assembled structures of rolA are observed: spherical, rod-like, and mesh-like.

The protein localises to the secreted. Its subcellular location is the cell wall. Functionally, aerial growth, conidiation, and dispersal of filamentous fungi in the environment rely upon a capability of their secreting small amphipathic proteins called hydrophobins (HPBs) with low sequence identity. Class I can self-assemble into an outermost layer of rodlet bundles on aerial cell surfaces, conferring cellular hydrophobicity that supports fungal growth, development and dispersal; whereas Class II form highly ordered films at water-air interfaces through intermolecular interactions but contribute nothing to the rodlet structure. RolA is a class I hydrophobin that undergoes a conformational change after its adsorption to hydrophobic surfaces such as the biodegradable polyester polybutylene succinate-coadipate (PBSA) and recruits the cutinase cutL1, resulting in condensation of cutL1 on the PBSA surface and consequent stimulation of PBSA hydrolysis. Increases also the activity of polyethylene terephthalate hydrolase (PETase) that hydrolyzes polyethylene terephthalate (PET), one of the most well-known polyesters that is widely used as packaging material, when the PET samples are preincubated with the hydrophobin. The wetting effect of rolA probably acts on PET surface to become hydrophilic, which leads PETase easier to contact and attack the surface. This Aspergillus oryzae (strain ATCC 42149 / RIB 40) (Yellow koji mold) protein is Class I hydrophobin A.